The following is a 394-amino-acid chain: V-type proton ATPase subunit C (394 aa).

The residue at position 17 (S17) is a Phosphoserine.

The protein belongs to the V-ATPase C subunit family. V-ATPase is a heteromultimeric enzyme composed of a peripheral catalytic V1 complex (components A to H) attached to an integral membrane V0 proton pore complex (components: a, c, c', c'', d, e, f and VOA1).

Its subcellular location is the cytoplasm. The protein resides in the vacuole membrane. In terms of biological role, subunit of the V1 complex of vacuolar(H+)-ATPase (V-ATPase), a multisubunit enzyme composed of a peripheral complex (V1) that hydrolyzes ATP and a membrane integral complex (V0) that translocates protons. V-ATPase is responsible for acidifying and maintaining the pH of intracellular compartments. Subunit C is necessary for the assembly of the catalytic sector of the enzyme and is likely to have a specific function in its catalytic activity. Reversibly leaves the enzyme after glucose depletion, causing the catalytic subcomplex V1 to detach from the V0 section. The sequence is that of V-type proton ATPase subunit C from Schizosaccharomyces pombe (strain 972 / ATCC 24843) (Fission yeast).